Here is a 529-residue protein sequence, read N- to C-terminus: Bifunctional purine biosynthesis protein PurH (529 aa).

Positions 2–149 constitute an MGS-like domain; sequence TNLVPVGRAL…KNHRFVNVVT (148 aa).

This sequence belongs to the PurH family.

It carries out the reaction (6R)-10-formyltetrahydrofolate + 5-amino-1-(5-phospho-beta-D-ribosyl)imidazole-4-carboxamide = 5-formamido-1-(5-phospho-D-ribosyl)imidazole-4-carboxamide + (6S)-5,6,7,8-tetrahydrofolate. The enzyme catalyses IMP + H2O = 5-formamido-1-(5-phospho-D-ribosyl)imidazole-4-carboxamide. It functions in the pathway purine metabolism; IMP biosynthesis via de novo pathway; 5-formamido-1-(5-phospho-D-ribosyl)imidazole-4-carboxamide from 5-amino-1-(5-phospho-D-ribosyl)imidazole-4-carboxamide (10-formyl THF route): step 1/1. Its pathway is purine metabolism; IMP biosynthesis via de novo pathway; IMP from 5-formamido-1-(5-phospho-D-ribosyl)imidazole-4-carboxamide: step 1/1. The sequence is that of Bifunctional purine biosynthesis protein PurH from Cereibacter sphaeroides (strain ATCC 17029 / ATH 2.4.9) (Rhodobacter sphaeroides).